A 236-amino-acid polypeptide reads, in one-letter code: 2-C-methyl-D-erythritol 4-phosphate cytidylyltransferase (236 aa).

This sequence belongs to the IspD/TarI cytidylyltransferase family. IspD subfamily.

The enzyme catalyses 2-C-methyl-D-erythritol 4-phosphate + CTP + H(+) = 4-CDP-2-C-methyl-D-erythritol + diphosphate. Its pathway is isoprenoid biosynthesis; isopentenyl diphosphate biosynthesis via DXP pathway; isopentenyl diphosphate from 1-deoxy-D-xylulose 5-phosphate: step 2/6. Its function is as follows. Catalyzes the formation of 4-diphosphocytidyl-2-C-methyl-D-erythritol from CTP and 2-C-methyl-D-erythritol 4-phosphate (MEP). This Burkholderia pseudomallei (strain 1106a) protein is 2-C-methyl-D-erythritol 4-phosphate cytidylyltransferase.